A 51-amino-acid polypeptide reads, in one-letter code: Large ribosomal subunit protein eL39 (51 aa).

This sequence belongs to the eukaryotic ribosomal protein eL39 family.

The chain is Large ribosomal subunit protein eL39 from Thermococcus gammatolerans (strain DSM 15229 / JCM 11827 / EJ3).